A 994-amino-acid chain; its full sequence is NACHT, LRR and PYD domains-containing protein 4 (994 aa).

The Pyrin domain occupies 1–94 (MAASFFSDFG…CMKVMRERTG (94 aa)). The 324-residue stretch at 149 to 472 (RTVIIQGPQG…FYLLKSHLDH (324 aa)) folds into the NACHT domain. Residue 155-162 (GPQGIGKT) participates in ATP binding. LRR repeat units lie at residues 637-660 (SGHLRELQVQDSTLSESTFVTWCN), 698-721 (YLSFTLTKLSRDDIRSLCDALNYP), 722-745 (AGNVKELALVNCHLSPIDCEVLAG), 750-777 (NKKLTYLNVSCNQLDTGVPLLCEALCSP), 806-833 (NKSVRYLDLSANVLKDEGLKTLCEALKH), 863-886 (NQNLKILQIGCNEIGDVGVQLLCR), 920-943 (SKTLQQLNLTLNTLDHTGVVVLCE), and 949-972 (ECALQVLGLRKTDFDEETQALLTA).

This sequence belongs to the NLRP family. As to quaternary structure, interacts with CHUK/IKKA, inhibiting its kinase activity.

Functionally, may be involved in inflammation and recognition of cytosolic pathogen-associated molecular patterns (PAMPs) not intercepted by membrane-bound receptors. Acts as a negative regulator of the type I interferon signaling pathway by serving as an adapter to promote DTX4-mediated ubiquitination of activated TBK1, and its subsequent degradation. Suppresses NF-kappaB induction by the cytokines TNFA and IL1B, suggesting that it operates at a point of convergence in these two cytokine signaling pathways. This chain is NACHT, LRR and PYD domains-containing protein 4, found in Homo sapiens (Human).